Consider the following 31-residue polypeptide: Photosystem II reaction center protein T (31 aa).

The helical transmembrane segment at 3–23 (SFAYILILGLAIATLFFAIAF) threads the bilayer.

The protein belongs to the PsbT family. PSII is composed of 1 copy each of membrane proteins PsbA, PsbB, PsbC, PsbD, PsbE, PsbF, PsbH, PsbI, PsbJ, PsbK, PsbL, PsbM, PsbT, PsbX, PsbY, PsbZ, Psb30/Ycf12, peripheral proteins PsbO, CyanoQ (PsbQ), PsbU, PsbV and a large number of cofactors. It forms dimeric complexes.

It is found in the cellular thylakoid membrane. In terms of biological role, found at the monomer-monomer interface of the photosystem II (PS II) dimer, plays a role in assembly and dimerization of PSII. PSII is a light-driven water plastoquinone oxidoreductase, using light energy to abstract electrons from H(2)O, generating a proton gradient subsequently used for ATP formation. The protein is Photosystem II reaction center protein T of Synechococcus sp. (strain CC9311).